We begin with the raw amino-acid sequence, 450 residues long: Probable ECA polymerase (450 aa).

Transmembrane regions (helical) follow at residues 6-26, 37-57, 63-83, 118-138, 155-175, 181-201, 207-227, 228-248, 341-361, 378-398, and 410-430; these read FSGLFVVWLLCTLFIATLTWF, VFFSLLFLLTFFFGFPLTSVL, VGVAPPEILLQALLSAGCFYA, VILMGIALVSVGIFFMHNGFL, GVALKRFFYFFIPAMLVVYFL, AWLFFLVSTVAFGLLTYMIVG, IIIAFAIFLFIGIIRGWISLW, MLAAAGVLGIVGMFWLALKRY, LVVMGGALFIPLGAIVVGLII, YKAAILHSFCFGAIFNMIVLA, and VFFIVVFGACLMIAKLLYWLF.

The protein belongs to the WzyE family. Probably part of a complex composed of WzxE, WzyE and WzzE.

It localises to the cell inner membrane. The protein operates within bacterial outer membrane biogenesis; enterobacterial common antigen biosynthesis. Functionally, probably involved in the polymerization of enterobacterial common antigen (ECA) trisaccharide repeat units. The sequence is that of Probable ECA polymerase from Shigella boydii serotype 18 (strain CDC 3083-94 / BS512).